Reading from the N-terminus, the 641-residue chain is 1-deoxy-D-xylulose-5-phosphate synthase (641 aa).

Thiamine diphosphate is bound by residues His-79 and 120–122 (AHS). Asp-151 is a Mg(2+) binding site. Thiamine diphosphate is bound by residues 152 to 153 (GS), Asn-180, Tyr-290, and Glu-372. Residue Asn-180 participates in Mg(2+) binding.

Belongs to the transketolase family. DXPS subfamily. In terms of assembly, homodimer. The cofactor is Mg(2+). Thiamine diphosphate is required as a cofactor.

The enzyme catalyses D-glyceraldehyde 3-phosphate + pyruvate + H(+) = 1-deoxy-D-xylulose 5-phosphate + CO2. Its pathway is metabolic intermediate biosynthesis; 1-deoxy-D-xylulose 5-phosphate biosynthesis; 1-deoxy-D-xylulose 5-phosphate from D-glyceraldehyde 3-phosphate and pyruvate: step 1/1. Catalyzes the acyloin condensation reaction between C atoms 2 and 3 of pyruvate and glyceraldehyde 3-phosphate to yield 1-deoxy-D-xylulose-5-phosphate (DXP). The protein is 1-deoxy-D-xylulose-5-phosphate synthase of Rhodopseudomonas palustris (strain BisB18).